The sequence spans 574 residues: Proline--tRNA ligase (574 aa).

It belongs to the class-II aminoacyl-tRNA synthetase family. ProS type 1 subfamily. Homodimer.

Its subcellular location is the cytoplasm. It catalyses the reaction tRNA(Pro) + L-proline + ATP = L-prolyl-tRNA(Pro) + AMP + diphosphate. Functionally, catalyzes the attachment of proline to tRNA(Pro) in a two-step reaction: proline is first activated by ATP to form Pro-AMP and then transferred to the acceptor end of tRNA(Pro). As ProRS can inadvertently accommodate and process non-cognate amino acids such as alanine and cysteine, to avoid such errors it has two additional distinct editing activities against alanine. One activity is designated as 'pretransfer' editing and involves the tRNA(Pro)-independent hydrolysis of activated Ala-AMP. The other activity is designated 'posttransfer' editing and involves deacylation of mischarged Ala-tRNA(Pro). The misacylated Cys-tRNA(Pro) is not edited by ProRS. The sequence is that of Proline--tRNA ligase from Thioalkalivibrio sulfidiphilus (strain HL-EbGR7).